Reading from the N-terminus, the 248-residue chain is MKLNVSYPATGCQKLFEVVDEHKLRVFYEKRMGQVVEADILGDEWKGYQLRIAGGNDKQGFPMKQGVLTHGRVRLLLKKGHSCYRPRRTGERKRKSVRGCIVDANMSVLALVVLKKGEKDIPGLTDTTIPRRLGPKRASKIRKLYNLSKEDDVRRFVVRRPLPAKDNKKATSKAPKIQRLITPVVLQRKHRRIALKKKRQIASKEASADYAKLLVQRKKESKAKREEAKRRRSASIRESKSSVSSDKK.

The disordered stretch occupies residues 215 to 248 (VQRKKESKAKREEAKRRRSASIRESKSSVSSDKK). The span at 223 to 248 (AKREEAKRRRSASIRESKSSVSSDKK) shows a compositional bias: basic and acidic residues. Phosphoserine is present on residues S233, S235, S239, S242, S244, and S245.

The protein belongs to the eukaryotic ribosomal protein eS6 family. In terms of assembly, component of the small ribosomal subunit. Part of the small subunit (SSU) processome, composed of more than 70 proteins and the RNA chaperone small nucleolar RNA (snoRNA) U3. In terms of processing, ribosomal protein S6 is the major substrate of protein kinases in eukaryote ribosomes. The phosphorylation is stimulated by growth factors, tumor promoting agents, and mitogens. It is dephosphorylated at growth arrest.

It localises to the cytoplasm. The protein localises to the nucleus. It is found in the nucleolus. Component of the 40S small ribosomal subunit. Plays an important role in controlling cell growth and proliferation through the selective translation of particular classes of mRNA. Part of the small subunit (SSU) processome, first precursor of the small eukaryotic ribosomal subunit. During the assembly of the SSU processome in the nucleolus, many ribosome biogenesis factors, an RNA chaperone and ribosomal proteins associate with the nascent pre-rRNA and work in concert to generate RNA folding, modifications, rearrangements and cleavage as well as targeted degradation of pre-ribosomal RNA by the RNA exosome. This is Small ribosomal subunit protein eS6 (RpS6) from Drosophila melanogaster (Fruit fly).